Here is a 130-residue protein sequence, read N- to C-terminus: Small ribosomal subunit protein uS9 (130 aa).

Belongs to the universal ribosomal protein uS9 family.

The sequence is that of Small ribosomal subunit protein uS9 from Nitrosomonas eutropha (strain DSM 101675 / C91 / Nm57).